The following is a 395-amino-acid chain: Zinc-regulated GTPase metalloprotein activator 1F (395 aa).

A disordered region spans residues 1 to 22 (MLPAVGSVDEEEDPAEEDCPEL). Residues 8 to 20 (VDEEEDPAEEDCP) show a composition bias toward acidic residues. Residues 17–24 (EDCPELVP) carry the psi-PxLVp motif motif. 49–56 (GYLGAGKT) lines the GTP pocket. Residues Cys-107, Cys-109, and Cys-110 each coordinate Zn(2+). Residues 107 to 110 (CLCC) carry the CXCC motif motif. Residues 110 to 114 (CSVKD) and 203 to 206 (NKTD) each bind GTP. A CobW C-terminal domain is found at 274-377 (IVTITFDVPG…ILKQLFIATV (104 aa)).

It belongs to the SIMIBI class G3E GTPase family. ZNG1 subfamily.

It localises to the nucleus. The enzyme catalyses GTP + H2O = GDP + phosphate + H(+). In terms of biological role, zinc chaperone that directly transfers zinc cofactor to target metalloproteins, thereby activating them. Catalyzes zinc insertion into the active site of methionine aminopeptidase METAP1, which function to cleave the initiator methionine from polypeptides during or after protein translation. Mechanistically, the N-terminal psi-PxLVp motif binds to the C6H2-type zinc finger of inactive form of METAP1. After formation of the docked complex, zinc is transferred from the CXCC motif in the GTPase domain of ZNG1F to the zinc binding site in the peptidase domain of METAP1 in a process requiring GTP hydrolysis. GTP/GDP exchange is required for release of active METAP1. This chain is Zinc-regulated GTPase metalloprotein activator 1F, found in Homo sapiens (Human).